Reading from the N-terminus, the 349-residue chain is Flagellar P-ring protein (349 aa).

A signal peptide spans 1-16 (MKYFFIIALLLSSLYS).

The protein belongs to the FlgI family. In terms of assembly, the basal body constitutes a major portion of the flagellar organelle and consists of four rings (L,P,S, and M) mounted on a central rod.

It is found in the periplasm. It localises to the bacterial flagellum basal body. Its function is as follows. Assembles around the rod to form the L-ring and probably protects the motor/basal body from shearing forces during rotation. The polypeptide is Flagellar P-ring protein (Aliarcobacter butzleri (strain RM4018) (Arcobacter butzleri)).